Consider the following 381-residue polypeptide: Gustatory and pheromone receptor 39a, isoform D (381 aa).

The Cytoplasmic segment spans residues 1–43 (MKRNAFEELRVQLRTLKWLGVLRFTIDFNKCLVRENASEERSA). Residues 44–64 (WLYLIGVVGITCSLIVYSTYF) traverse the membrane as a helical segment. Residues 65–78 (PSHFIMGKHNTTGN) lie on the Extracellular side of the membrane. A glycan (N-linked (GlcNAc...) asparagine) is linked at asparagine 74. A helical membrane pass occupies residues 79–101 (CYALINIRSCSIVTMLIYTQLYI). Topologically, residues 102 to 128 (QRFRFVALLQSILRFNQISGSHREEGR) are cytoplasmic. A helical transmembrane segment spans residues 129 to 149 (FAFYYYTHLSLLIICMLNYAY). The Extracellular portion of the chain corresponds to 150-172 (GYWTAGVRLTTIPIYLLQYGFSY). Residues 173–193 (LFLGQVVVLFACIQQILLSIL) traverse the membrane as a helical segment. Topologically, residues 194–234 (KYYNQVVLKNIKSSKESREFYYNFCKYNQVIWLSYTEINHC) are cytoplasmic. Residues 235–255 (FGLLLLLVTGLILLITPSGPF) form a helical membrane-spanning segment. Residues 256 to 273 (YLVSTIFEGRFRQNWQFS) are Extracellular-facing. The chain crosses the membrane as a helical span at residues 274-294 (LMSFTAILWSLPWIVLLVLAM). Over 295–350 (GRNDVQKEANKTAKMLTKVPRTGTGLDRMIEKFLLKNLRQKPILTAYGFFALDKST) the chain is Cytoplasmic. The chain crosses the membrane as a helical span at residues 351 to 371 (LFKLFTAIFTYMVILVQFKEM). Residues 372–381 (ENSTKSINKF) lie on the Extracellular side of the membrane. A glycan (N-linked (GlcNAc...) asparagine) is linked at asparagine 373.

The protein belongs to the insect chemoreceptor superfamily. Gustatory receptor (GR) family. Gr21a subfamily. As to expression, expressed in the adult labellar chemosensory neurons and adult thorax and abdomen.

The protein resides in the cell membrane. Functionally, gustatory receptor which mediates acceptance or avoidance behavior, depending on its substrates. Plays a role in sustaining courtship behavior in males, possibly through the reception of a stimulating arrestant pheromone. In Drosophila melanogaster (Fruit fly), this protein is Gustatory and pheromone receptor 39a, isoform D (Gr39a).